Consider the following 136-residue polypeptide: ATP synthase epsilon chain (136 aa).

It belongs to the ATPase epsilon chain family. As to quaternary structure, F-type ATPases have 2 components, CF(1) - the catalytic core - and CF(0) - the membrane proton channel. CF(1) has five subunits: alpha(3), beta(3), gamma(1), delta(1), epsilon(1). CF(0) has three main subunits: a, b and c.

It localises to the cell membrane. Its function is as follows. Produces ATP from ADP in the presence of a proton gradient across the membrane. This Macrococcus caseolyticus (strain JCSC5402) (Macrococcoides caseolyticum) protein is ATP synthase epsilon chain.